The chain runs to 154 residues: Cytochrome c-type biogenesis protein CcmE (154 aa).

Residues 1-7 (MKPRQKR) are Cytoplasmic-facing. The chain crosses the membrane as a helical; Signal-anchor for type II membrane protein span at residues 8–28 (LVLIVGIVAAVGVAAALVLNA). The Periplasmic portion of the chain corresponds to 29–154 (FQSNLVFFYS…GETVVKETRP (126 aa)). The heme site is built by His-121 and Tyr-125. A disordered region spans residues 131–154 (AEALQRAGASNQKLGETVVKETRP).

It belongs to the CcmE/CycJ family.

The protein localises to the cell inner membrane. In terms of biological role, heme chaperone required for the biogenesis of c-type cytochromes. Transiently binds heme delivered by CcmC and transfers the heme to apo-cytochromes in a process facilitated by CcmF and CcmH. This is Cytochrome c-type biogenesis protein CcmE from Methylibium petroleiphilum (strain ATCC BAA-1232 / LMG 22953 / PM1).